We begin with the raw amino-acid sequence, 160 residues long: Transcription elongation factor GreA (160 aa).

Residues 2–30 are a coiled coil; sequence SEKTYPMTLAEKEQLEQELEELKLVRRPE.

This sequence belongs to the GreA/GreB family.

Necessary for efficient RNA polymerase transcription elongation past template-encoded arresting sites. The arresting sites in DNA have the property of trapping a certain fraction of elongating RNA polymerases that pass through, resulting in locked ternary complexes. Cleavage of the nascent transcript by cleavage factors such as GreA or GreB allows the resumption of elongation from the new 3'terminus. GreA releases sequences of 2 to 3 nucleotides. This Streptococcus mutans serotype c (strain ATCC 700610 / UA159) protein is Transcription elongation factor GreA.